The primary structure comprises 76 residues: RNA-binding protein KhpA (76 aa).

One can recognise a KH domain in the interval 30 to 76 (GEVLEVRVNPEDLGRVIGRSGRTAKALRTLVTALADGRRVRVDVVDD).

Belongs to the KhpA RNA-binding protein family.

The protein localises to the cytoplasm. In terms of biological role, a probable RNA-binding protein. The protein is RNA-binding protein KhpA of Leifsonia xyli subsp. xyli (strain CTCB07).